Consider the following 439-residue polypeptide: RNA polymerase II-associated protein RBA50 (439 aa).

Disordered stretches follow at residues 1–35 (MDLL…GFPE) and 49–79 (LREK…SEAK). A compositionally biased stretch (polar residues) spans 15-30 (SVESNDNGTLSTNNCG).

Belongs to the RPAP1 family.

It localises to the cytoplasm. Forms an interface between the RNA polymerase II enzyme and chaperone/scaffolding proteins, suggesting that it is required to connect RNA polymerase II to regulators of protein complex formation. This Saccharomyces cerevisiae (strain ATCC 204508 / S288c) (Baker's yeast) protein is RNA polymerase II-associated protein RBA50 (RBA50).